Consider the following 243-residue polypeptide: Pyridoxine 5'-phosphate synthase (243 aa).

Residue N7 participates in 3-amino-2-oxopropyl phosphate binding. 9 to 10 (DH) lines the 1-deoxy-D-xylulose 5-phosphate pocket. R18 provides a ligand contact to 3-amino-2-oxopropyl phosphate. H43 acts as the Proton acceptor in catalysis. 1-deoxy-D-xylulose 5-phosphate-binding residues include R45 and H50. Catalysis depends on E70, which acts as the Proton acceptor. 1-deoxy-D-xylulose 5-phosphate is bound at residue T100. H190 serves as the catalytic Proton donor. 3-amino-2-oxopropyl phosphate-binding positions include G191 and 212 to 213 (GH).

The protein belongs to the PNP synthase family. In terms of assembly, homooctamer; tetramer of dimers.

The protein resides in the cytoplasm. The enzyme catalyses 3-amino-2-oxopropyl phosphate + 1-deoxy-D-xylulose 5-phosphate = pyridoxine 5'-phosphate + phosphate + 2 H2O + H(+). The protein operates within cofactor biosynthesis; pyridoxine 5'-phosphate biosynthesis; pyridoxine 5'-phosphate from D-erythrose 4-phosphate: step 5/5. Catalyzes the complicated ring closure reaction between the two acyclic compounds 1-deoxy-D-xylulose-5-phosphate (DXP) and 3-amino-2-oxopropyl phosphate (1-amino-acetone-3-phosphate or AAP) to form pyridoxine 5'-phosphate (PNP) and inorganic phosphate. In Prochlorococcus marinus (strain MIT 9211), this protein is Pyridoxine 5'-phosphate synthase.